The chain runs to 228 residues: Ribose-5-phosphate isomerase A (228 aa).

Substrate contacts are provided by residues 32–35 (TGST), 85–88 (DGAD), and 98–101 (KGGG). The Proton acceptor role is filled by Glu-107. Residue Lys-125 participates in substrate binding.

The protein belongs to the ribose 5-phosphate isomerase family. As to quaternary structure, homodimer.

It carries out the reaction aldehydo-D-ribose 5-phosphate = D-ribulose 5-phosphate. It functions in the pathway carbohydrate degradation; pentose phosphate pathway; D-ribose 5-phosphate from D-ribulose 5-phosphate (non-oxidative stage): step 1/1. In terms of biological role, catalyzes the reversible conversion of ribose-5-phosphate to ribulose 5-phosphate. This Cupriavidus taiwanensis (strain DSM 17343 / BCRC 17206 / CCUG 44338 / CIP 107171 / LMG 19424 / R1) (Ralstonia taiwanensis (strain LMG 19424)) protein is Ribose-5-phosphate isomerase A.